Here is a 383-residue protein sequence, read N- to C-terminus: Cell division protein FtsZ (383 aa).

GTP is bound by residues Gly20–Asn24, Gly107–Gly109, Glu138, Arg142, and Asn186.

It belongs to the FtsZ family. Homodimer. Polymerizes to form a dynamic ring structure in a strictly GTP-dependent manner. Interacts directly with several other division proteins.

It is found in the cytoplasm. Functionally, essential cell division protein that forms a contractile ring structure (Z ring) at the future cell division site. The regulation of the ring assembly controls the timing and the location of cell division. One of the functions of the FtsZ ring is to recruit other cell division proteins to the septum to produce a new cell wall between the dividing cells. Binds GTP and shows GTPase activity. This is Cell division protein FtsZ from Escherichia coli O157:H7.